The chain runs to 85 residues: uncharacterized protein (85 aa).

The next 2 membrane-spanning stretches (helical) occupy residues 14-34 (FLFG…RATI) and 60-80 (IFVY…IYFL).

The protein resides in the cell membrane. This is an uncharacterized protein from Escherichia coli O157:H7.